The primary structure comprises 116 residues: Probable transcriptional regulator WhiB6 (116 aa).

Residues C12, C53, C56, and C62 each contribute to the [4Fe-4S] cluster site. In terms of domain architecture, 4Fe-4S Wbl-type spans 33–86 (VCTQDPDRWTTTPDDEAKTLCRACPRRWLCARDAVESAGAEGLWAGVVIPESGR).

This sequence belongs to the WhiB family. The cofactor is [4Fe-4S] cluster. The Fe-S cluster can be nitrosylated by nitric oxide (NO). In terms of processing, upon Fe-S cluster removal intramolecular disulfide bonds are formed.

It localises to the cytoplasm. Acts as a transcriptional regulator. Probably redox-responsive. The apo- but not holo-form probably binds DNA. The polypeptide is Probable transcriptional regulator WhiB6 (whiB6) (Mycobacterium tuberculosis (strain CDC 1551 / Oshkosh)).